The primary structure comprises 212 residues: Imidazole glycerol phosphate synthase subunit HisH 2 (212 aa).

The Glutamine amidotransferase type-1 domain occupies 4–211 (HLGLIDYGMG…LDWLQRGAPI (208 aa)). The active-site Nucleophile is Cys-82. Active-site residues include His-186 and Glu-188.

In terms of assembly, heterodimer of HisH and HisF.

The protein localises to the cytoplasm. It catalyses the reaction 5-[(5-phospho-1-deoxy-D-ribulos-1-ylimino)methylamino]-1-(5-phospho-beta-D-ribosyl)imidazole-4-carboxamide + L-glutamine = D-erythro-1-(imidazol-4-yl)glycerol 3-phosphate + 5-amino-1-(5-phospho-beta-D-ribosyl)imidazole-4-carboxamide + L-glutamate + H(+). The enzyme catalyses L-glutamine + H2O = L-glutamate + NH4(+). The protein operates within amino-acid biosynthesis; L-histidine biosynthesis; L-histidine from 5-phospho-alpha-D-ribose 1-diphosphate: step 5/9. In terms of biological role, IGPS catalyzes the conversion of PRFAR and glutamine to IGP, AICAR and glutamate. The HisH subunit provides the glutamine amidotransferase activity that produces the ammonia necessary to HisF for the synthesis of IGP and AICAR. The protein is Imidazole glycerol phosphate synthase subunit HisH 2 (hisH2) of Parasynechococcus marenigrum (strain WH8102).